A 374-amino-acid chain; its full sequence is Succinyl-diaminopimelate desuccinylase (374 aa).

Zn(2+) is bound at residue His-66. Asp-68 is a catalytic residue. Residue Asp-99 participates in Zn(2+) binding. Glu-133 acts as the Proton acceptor in catalysis. Residues Glu-134, Glu-162, and His-348 each coordinate Zn(2+).

This sequence belongs to the peptidase M20A family. DapE subfamily. As to quaternary structure, homodimer. The cofactor is Zn(2+). It depends on Co(2+) as a cofactor.

The catalysed reaction is N-succinyl-(2S,6S)-2,6-diaminopimelate + H2O = (2S,6S)-2,6-diaminopimelate + succinate. It participates in amino-acid biosynthesis; L-lysine biosynthesis via DAP pathway; LL-2,6-diaminopimelate from (S)-tetrahydrodipicolinate (succinylase route): step 3/3. In terms of biological role, catalyzes the hydrolysis of N-succinyl-L,L-diaminopimelic acid (SDAP), forming succinate and LL-2,6-diaminopimelate (DAP), an intermediate involved in the bacterial biosynthesis of lysine and meso-diaminopimelic acid, an essential component of bacterial cell walls. The polypeptide is Succinyl-diaminopimelate desuccinylase (Coxiella burnetii (strain RSA 331 / Henzerling II)).